A 1158-amino-acid polypeptide reads, in one-letter code: ATP-dependent helicase/deoxyribonuclease subunit B (1158 aa).

The UvrD-like helicase ATP-binding domain maps to 1 to 275; it reads MTLHAYLGRA…QYFNQLYRFN (275 aa). Position 8 to 15 (8 to 15) interacts with ATP; it reads GRAGTGKS. The region spanning 269 to 583 is the UvrD-like helicase C-terminal domain; sequence NQLYRFNNQD…SIGTMDLAKV (315 aa). C784, C1112, C1115, and C1121 together coordinate [4Fe-4S] cluster.

It belongs to the helicase family. AddB/RexB type 1 subfamily. In terms of assembly, heterodimer of AddA and AddB. Mg(2+) is required as a cofactor. [4Fe-4S] cluster serves as cofactor.

Its function is as follows. The heterodimer acts as both an ATP-dependent DNA helicase and an ATP-dependent, dual-direction single-stranded exonuclease. Recognizes the chi site generating a DNA molecule suitable for the initiation of homologous recombination. The AddB subunit has 5' -&gt; 3' nuclease activity but not helicase activity. The protein is ATP-dependent helicase/deoxyribonuclease subunit B of Staphylococcus aureus (strain MW2).